The primary structure comprises 164 residues: MTIAFYPGSFDPMTNGHLDVLIQALNVASKVIVAVGIHPGKAPLFSFDERAALISRALSETLPGEAARVEVVSFDNLVVDAARQHGAHLLLRGLRDGTDLDYEMQMAGMNRQMAPDIQTVFLPAGTSSRPITATLVRQIAAMGGNVDAFVPKAVLEALNAKLKR.

Substrate is bound at residue S9. Residues 9–10 (SF) and H17 contribute to the ATP site. Positions 41, 78, and 92 each coordinate substrate. Residues 93 to 95 (GLR), E103, and 128 to 134 (SRPITAT) contribute to the ATP site.

Belongs to the bacterial CoaD family. Homohexamer. It depends on Mg(2+) as a cofactor.

Its subcellular location is the cytoplasm. It catalyses the reaction (R)-4'-phosphopantetheine + ATP + H(+) = 3'-dephospho-CoA + diphosphate. It participates in cofactor biosynthesis; coenzyme A biosynthesis; CoA from (R)-pantothenate: step 4/5. Reversibly transfers an adenylyl group from ATP to 4'-phosphopantetheine, yielding dephospho-CoA (dPCoA) and pyrophosphate. The polypeptide is Phosphopantetheine adenylyltransferase (Agrobacterium fabrum (strain C58 / ATCC 33970) (Agrobacterium tumefaciens (strain C58))).